The following is a 785-amino-acid chain: Cullin-3 (785 aa).

Positions 715-777 (SRKHQADACI…REYLQRQADN (63 aa)) constitute a Cullin neddylation domain. Lysine 729 participates in a covalent cross-link: Glycyl lysine isopeptide (Lys-Gly) (interchain with G-Cter in NEDD8).

Belongs to the cullin family. As to quaternary structure, probable component of multiple cullin-RING-based BC3B (BTB-CUL3-BTB) E3 ubiquitin-protein ligase complexes formed by cul-3, rbx-1 and a variable BTB domain-containing protein as adapter and substrate recognition component. Interacts with btb1, btb2, btb3, nedd8 and pip1. Post-translationally, neddylated; enhancing the ubiquitin-ligase activity.

The protein localises to the cytoplasm. It functions in the pathway protein modification; protein ubiquitination. Probable core component of multiple cullin-RING-based BC3B (BTB-CUL3-BTB) E3 ubiquitin-protein ligase complexes which mediate the ubiquitination and subsequent proteasomal degradation of target proteins. As a scaffold protein may contribute to catalysis through positioning of the substrate and the ubiquitin-conjugating enzyme. The functional specificity of the BC3B complex depends on the substrate recognition component. Involved in ubiquitin-mediated degradation of btb3. This chain is Cullin-3 (cul3), found in Schizosaccharomyces pombe (strain 972 / ATCC 24843) (Fission yeast).